A 172-amino-acid chain; its full sequence is Bifunctional protein PyrR (172 aa).

Positions 93–105 (VILIDDVLYTGRT) match the PRPP-binding motif.

It belongs to the purine/pyrimidine phosphoribosyltransferase family. PyrR subfamily. As to quaternary structure, homodimer and homohexamer; in equilibrium.

The enzyme catalyses UMP + diphosphate = 5-phospho-alpha-D-ribose 1-diphosphate + uracil. Functionally, regulates transcriptional attenuation of the pyrimidine nucleotide (pyr) operon by binding in a uridine-dependent manner to specific sites on pyr mRNA. This disrupts an antiterminator hairpin in the RNA and favors formation of a downstream transcription terminator, leading to a reduced expression of downstream genes. Also displays a weak uracil phosphoribosyltransferase activity which is not physiologically significant. The protein is Bifunctional protein PyrR of Streptococcus sanguinis (strain SK36).